We begin with the raw amino-acid sequence, 401 residues long: Mu-type opioid receptor (401 aa).

Residues 1–69 (MDSSADPRNA…CPPTGSPSMV (69 aa)) are Extracellular-facing. Asn-9, Asn-12, Asn-34, Asn-41, and Asn-49 each carry an N-linked (GlcNAc...) asparagine glycan. Residues 70–94 (TAITIMALYSIVCVVGLFGNFLVMY) form a helical membrane-spanning segment. At 95 to 107 (VIVRYTKMKTATN) the chain is on the cytoplasmic side. Residues 108–132 (IYIFNLALADALATSTLPFQSVNYL) form a helical membrane-spanning segment. The Extracellular segment spans residues 133-143 (MGTWPFGTILC). Cysteines 143 and 220 form a disulfide. Residues 144-166 (KIVISIDYYNMFTSIFTLCTMSV) traverse the membrane as a helical segment. Topologically, residues 167 to 186 (DRYIAVCHPVKALDFRTPRN) are cytoplasmic. Tyr-169 carries the post-translational modification Phosphotyrosine. A helical membrane pass occupies residues 187–208 (AKIINVCNWILSSAIGLPVMFM). Residues 209–231 (ATTKYRNGSIDCALTFSHPTWYW) are Extracellular-facing. The helical transmembrane segment at 232–256 (ENLLKICVFIFAFIMPVLIITVCYG) threads the bilayer. The Cytoplasmic segment spans residues 257–280 (LMILRLKSVRMLSGSKEKDRNLRR). A helical membrane pass occupies residues 281–307 (ITRMVLVVVAVFIVCWTPIHIYVIIKA). Residues 308 to 315 (LITIPETT) are Extracellular-facing. The chain crosses the membrane as a helical span at residues 316-339 (FQTVSWHFCIALGYTNSCLNPVLY). An NPxxY; plays a role in stabilizing the activated conformation of the receptor motif is present at residues 335–339 (NPVLY). Topologically, residues 340-401 (AFLDENFKRC…NLEAETAPLP (62 aa)) are cytoplasmic. Residue Cys-354 is the site of S-palmitoyl cysteine attachment. Positions 365–385 (NSARIRQNTRDHPSTANTVDR) are disordered. Ser-366 carries the phosphoserine modification. Phosphothreonine is present on Thr-373. Ser-378 is subject to Phosphoserine. Thr-397 carries the post-translational modification Phosphothreonine.

Belongs to the G-protein coupled receptor 1 family. Forms homooligomers and heterooligomers with other GPCRs, such as OPRD1, OPRK1, OPRL1, NPFFR2, ADRA2A, SSTR2, CNR1 and CCR5 (probably in dimeric forms). Interacts with heterotrimeric G proteins; interaction with a heterotrimeric complex containing GNAI1, GNB1 and GNG2 stabilizes the active conformation of the receptor and increases its affinity for endomorphin-2, the synthetic opioid peptide DAMGO and for morphinan agonists. Interacts with PPL; the interaction disrupts agonist-mediated G-protein activation. Interacts (via C-terminus) with DNAJB4 (via C-terminus). Interacts with calmodulin; the interaction inhibits the constitutive activity of OPRM1; it abolishes basal and attenuates agonist-stimulated G-protein coupling. Interacts with FLNA, PLD2, RANBP9 and WLS and GPM6A. Interacts with RTP4. Interacts with SYP and GNAS. Interacts with RGS9, RGS17, RGS20, RGS4, PPP1R9B and HINT1. Phosphorylated. Differentially phosphorylated in basal and agonist-induced conditions. Agonist-mediated phosphorylation modulates receptor internalization. Phosphorylated by GRK2 in a agonist-dependent manner. Phosphorylation at Tyr-169 requires receptor activation, is dependent on non-receptor protein tyrosine kinase Src and results in a decrease in agonist efficacy by reducing G-protein coupling efficiency. Phosphorylated on tyrosine residues; the phosphorylation is involved in agonist-induced G-protein-independent receptor down-regulation. Phosphorylation at Ser-378 is involved in G-protein-dependent but not beta-arrestin-dependent activation of the ERK pathway. In terms of processing, ubiquitinated. A basal ubiquitination seems not to be related to degradation. Ubiquitination is increased upon formation of OPRM1:OPRD1 oligomers leading to proteasomal degradation; the ubiquitination is diminished by RTP4.

The protein resides in the cell membrane. It is found in the cell projection. Its subcellular location is the axon. It localises to the perikaryon. The protein localises to the dendrite. The protein resides in the endosome. Its function is as follows. Receptor for endogenous opioids such as beta-endorphin and endomorphin. Receptor for natural and synthetic opioids including morphine, heroin, DAMGO, fentanyl, etorphine, buprenorphin and methadone. Also activated by enkephalin peptides, such as Met-enkephalin or Met-enkephalin-Arg-Phe, with higher affinity for Met-enkephalin-Arg-Phe. Agonist binding to the receptor induces coupling to an inactive GDP-bound heterotrimeric G-protein complex and subsequent exchange of GDP for GTP in the G-protein alpha subunit leading to dissociation of the G-protein complex with the free GTP-bound G-protein alpha and the G-protein beta-gamma dimer activating downstream cellular effectors. The agonist- and cell type-specific activity is predominantly coupled to pertussis toxin-sensitive G(i) and G(o) G alpha proteins, GNAI1, GNAI2, GNAI3 and GNAO1, and to a lesser extent to pertussis toxin-insensitive G alpha proteins GNAZ and GNA15. They mediate an array of downstream cellular responses, including inhibition of adenylate cyclase activity and both N-type and L-type calcium channels, activation of inward rectifying potassium channels, mitogen-activated protein kinase (MAPK), phospholipase C (PLC), phosphoinositide/protein kinase (PKC), phosphoinositide 3-kinase (PI3K) and regulation of NF-kappa-B. Also couples to adenylate cyclase stimulatory G alpha proteins. The selective temporal coupling to G-proteins and subsequent signaling can be regulated by RGSZ proteins, such as RGS9, RGS17 and RGS4. Phosphorylation by members of the GPRK subfamily of Ser/Thr protein kinases and association with beta-arrestins is involved in short-term receptor desensitization. Beta-arrestins associate with the GPRK-phosphorylated receptor and uncouple it from the G-protein thus terminating signal transduction. The phosphorylated receptor is internalized through endocytosis via clathrin-coated pits which involves beta-arrestins. The activation of the ERK pathway occurs either in a G-protein-dependent or a beta-arrestin-dependent manner and is regulated by agonist-specific receptor phosphorylation. Acts as a class A G-protein coupled receptor (GPCR) which dissociates from beta-arrestin at or near the plasma membrane and undergoes rapid recycling. Receptor down-regulation pathways are varying with the agonist and occur dependent or independent of G-protein coupling. Endogenous ligands induce rapid desensitization, endocytosis and recycling. Heterooligomerization with other GPCRs can modulate agonist binding, signaling and trafficking properties. Involved in neurogenesis. This Sus scrofa (Pig) protein is Mu-type opioid receptor (OPRM1).